Reading from the N-terminus, the 436-residue chain is Putative ankyrin repeat protein FPV245 (436 aa).

ANK repeat units follow at residues 1–30, 34–63, 67–96, 98–119, 123–152, 156–185, 189–218, 222–252, 253–283, and 287–317; these read MSVD…CINI, ETTT…QVNH, KIPN…DTSI, PVPC…KVNT, KSKT…DVNI, NGCY…YANV, YGNS…NISN, NGVT…DTDV, DGYT…DISI, and NGRN…LINE.

The chain is Putative ankyrin repeat protein FPV245 from Vertebrata (FPV).